The chain runs to 938 residues: Isoleucine--tRNA ligase (938 aa).

The short motif at 58–68 (PYANGNIHIGH) is the 'HIGH' region element. Glu561 is a binding site for L-isoleucyl-5'-AMP. The short motif at 602 to 606 (KMSKS) is the 'KMSKS' region element. Residue Lys605 coordinates ATP. Residues Cys901, Cys904, Cys921, and Cys924 each contribute to the Zn(2+) site.

Belongs to the class-I aminoacyl-tRNA synthetase family. IleS type 1 subfamily. As to quaternary structure, monomer. It depends on Zn(2+) as a cofactor.

The protein localises to the cytoplasm. The enzyme catalyses tRNA(Ile) + L-isoleucine + ATP = L-isoleucyl-tRNA(Ile) + AMP + diphosphate. Its function is as follows. Catalyzes the attachment of isoleucine to tRNA(Ile). As IleRS can inadvertently accommodate and process structurally similar amino acids such as valine, to avoid such errors it has two additional distinct tRNA(Ile)-dependent editing activities. One activity is designated as 'pretransfer' editing and involves the hydrolysis of activated Val-AMP. The other activity is designated 'posttransfer' editing and involves deacylation of mischarged Val-tRNA(Ile). This chain is Isoleucine--tRNA ligase, found in Yersinia enterocolitica serotype O:8 / biotype 1B (strain NCTC 13174 / 8081).